The sequence spans 154 residues: Small ribosomal subunit protein bS6 (154 aa).

The segment at 94–154 is disordered; that stretch reads VKQEGPLPTP…SSQGKESQKS (61 aa). Residues 103-112 are compositionally biased toward polar residues; the sequence is PRSSNKGYNQ. Basic and acidic residues predominate over residues 113-139; that stretch reads SEKKDIESIDSTNKSEFKEEANDKKTA. The span at 140–154 shows a compositional bias: polar residues; it reads TSESTSSQGKESQKS.

The protein belongs to the bacterial ribosomal protein bS6 family.

Its function is as follows. Binds together with bS18 to 16S ribosomal RNA. This Prochlorococcus marinus subsp. pastoris (strain CCMP1986 / NIES-2087 / MED4) protein is Small ribosomal subunit protein bS6.